The following is a 366-amino-acid chain: Chorismate synthase (366 aa).

Residue Arg-48 participates in NADP(+) binding. Residues 125–127 (RSS), 241–242 (NA), Gly-285, 300–304 (KPTSS), and Arg-326 each bind FMN.

It belongs to the chorismate synthase family. Homotetramer. FMNH2 is required as a cofactor.

It carries out the reaction 5-O-(1-carboxyvinyl)-3-phosphoshikimate = chorismate + phosphate. The protein operates within metabolic intermediate biosynthesis; chorismate biosynthesis; chorismate from D-erythrose 4-phosphate and phosphoenolpyruvate: step 7/7. Functionally, catalyzes the anti-1,4-elimination of the C-3 phosphate and the C-6 proR hydrogen from 5-enolpyruvylshikimate-3-phosphate (EPSP) to yield chorismate, which is the branch point compound that serves as the starting substrate for the three terminal pathways of aromatic amino acid biosynthesis. This reaction introduces a second double bond into the aromatic ring system. This Roseobacter denitrificans (strain ATCC 33942 / OCh 114) (Erythrobacter sp. (strain OCh 114)) protein is Chorismate synthase.